Here is a 211-residue protein sequence, read N- to C-terminus: Pyridoxine/pyridoxamine 5'-phosphate oxidase (211 aa).

Residues 7 to 10 (RREY) and K65 contribute to the substrate site. FMN is bound by residues 60-65 (RIVLLK), 75-76 (YT), R81, K82, and Q104. Substrate contacts are provided by Y122, R126, and S130. FMN-binding positions include 139 to 140 (QS) and W184. 190–192 (RLH) serves as a coordination point for substrate. Position 194 (R194) interacts with FMN.

It belongs to the pyridoxamine 5'-phosphate oxidase family. Homodimer. The cofactor is FMN.

It catalyses the reaction pyridoxamine 5'-phosphate + O2 + H2O = pyridoxal 5'-phosphate + H2O2 + NH4(+). It carries out the reaction pyridoxine 5'-phosphate + O2 = pyridoxal 5'-phosphate + H2O2. Its pathway is cofactor metabolism; pyridoxal 5'-phosphate salvage; pyridoxal 5'-phosphate from pyridoxamine 5'-phosphate: step 1/1. The protein operates within cofactor metabolism; pyridoxal 5'-phosphate salvage; pyridoxal 5'-phosphate from pyridoxine 5'-phosphate: step 1/1. Its function is as follows. Catalyzes the oxidation of either pyridoxine 5'-phosphate (PNP) or pyridoxamine 5'-phosphate (PMP) into pyridoxal 5'-phosphate (PLP). The protein is Pyridoxine/pyridoxamine 5'-phosphate oxidase of Vibrio parahaemolyticus serotype O3:K6 (strain RIMD 2210633).